Reading from the N-terminus, the 360-residue chain is uncharacterized protein (360 aa).

An ABC transporter domain is found at 4 to 235 (LSLQHIQKIY…PANMFVAGFI (232 aa)). ATP is bound at residue 37 to 44 (GPSGCGKS).

This sequence belongs to the ABC transporter superfamily.

This is an uncharacterized protein from Escherichia coli O157:H7.